The following is a 417-amino-acid chain: Alpha-galactosidase (417 aa).

The first 55 residues, 1-55 (MARASSSSSPPSPRLLLLLLVAVAATLLPEAAALGNFTAESRGARWRSRRARRRA), serve as a signal peptide directing secretion. Tryptophan 71, aspartate 106, aspartate 107, cysteine 156, lysine 183, aspartate 185, tryptophan 219, arginine 236, and aspartate 240 together coordinate alpha-D-galactose. 2 disulfides stabilise this stretch: cysteine 76–cysteine 108 and cysteine 156–cysteine 187. The active-site Nucleophile is the aspartate 185. The Proton donor role is filled by aspartate 240.

It belongs to the glycosyl hydrolase 27 family.

It catalyses the reaction Hydrolysis of terminal, non-reducing alpha-D-galactose residues in alpha-D-galactosides, including galactose oligosaccharides, galactomannans and galactolipids.. It carries out the reaction melibiose + H2O = D-galactose + D-glucose. The catalysed reaction is raffinose + H2O = sucrose + D-galactose. The enzyme catalyses stachyose + H2O = raffinose + D-galactose. It catalyses the reaction alpha-D-Gal-(1-&gt;6)-beta-D-Man-(1-&gt;4)-beta-D-Man-(1-&gt;4)-D-Man + H2O = beta-D-Man-(1-&gt;4)-beta-D-Man-(1-&gt;4)-D-Man + D-galactose. It carries out the reaction beta-D-Man-(1-&gt;4)-[alpha-D-Gal-(1-&gt;6)]-beta-D-Man-(1-&gt;4)-beta-D-Man-(1-&gt;4)-D-Man + H2O = beta-D-Man-(1-&gt;4)-beta-D-Man-(1-&gt;4)-beta-D-Man-(1-&gt;4)-D-Man + D-galactose. 1 mM Hg(2+) and Ag(2+) decrease activity by 98% and 96%, respectively. 1 mM Para-chloromercuribenzoic acid (PCMB) completely inhibits enzymatic activity. Functionally, hydrolyzes melibiose, raffinose and stachyose in the following decreasing order of reactivity: raffinose, melibiose, stachyose. Acts on both the terminal alpha-galactosyl residue and the side-chain alpha-galactosyl residue of the galactomanno-oligosaccharides. This is Alpha-galactosidase from Oryza sativa subsp. japonica (Rice).